A 1098-amino-acid polypeptide reads, in one-letter code: Unconventional myosin-If (1098 aa).

A Myosin motor domain is found at S17–E690. G110–T117 contributes to the ATP binding site. Residues P579–E589 form an actin-binding region. Residues F693 to N722 form the IQ domain. Positions K728–D917 constitute a TH1 domain. 2 disordered regions span residues V913–N1009 and K1021–P1044. The segment covering K924–R937 has biased composition (basic residues). S1023 carries the phosphoserine modification. One can recognise an SH3 domain in the interval T1041–I1098.

This sequence belongs to the TRAFAC class myosin-kinesin ATPase superfamily. Myosin family.

Its function is as follows. Myosins are actin-based motor molecules with ATPase activity. Unconventional myosins serve in intracellular movements. Their highly divergent tails are presumed to bind to membranous compartments, which would be moved relative to actin filaments. The sequence is that of Unconventional myosin-If (MYO1F) from Homo sapiens (Human).